We begin with the raw amino-acid sequence, 638 residues long: Threonine--tRNA ligase (638 aa).

Residues 1-61 (MPIITLPDGS…NKDSKVVIIT (61 aa)) enclose the TGS domain. Positions 242-533 (DHRKLGKKHS…LIEQYEAKFP (292 aa)) are catalytic. Zn(2+) contacts are provided by cysteine 333, histidine 384, and histidine 510.

It belongs to the class-II aminoacyl-tRNA synthetase family. In terms of assembly, homodimer. It depends on Zn(2+) as a cofactor.

The protein resides in the cytoplasm. It carries out the reaction tRNA(Thr) + L-threonine + ATP = L-threonyl-tRNA(Thr) + AMP + diphosphate + H(+). Catalyzes the attachment of threonine to tRNA(Thr) in a two-step reaction: L-threonine is first activated by ATP to form Thr-AMP and then transferred to the acceptor end of tRNA(Thr). Also edits incorrectly charged L-seryl-tRNA(Thr). The polypeptide is Threonine--tRNA ligase (Prochlorococcus marinus (strain AS9601)).